The sequence spans 256 residues: tRNA pseudouridine synthase A (256 aa).

Asp49 functions as the Nucleophile in the catalytic mechanism. Position 104 (Tyr104) interacts with substrate.

The protein belongs to the tRNA pseudouridine synthase TruA family.

The enzyme catalyses uridine(38/39/40) in tRNA = pseudouridine(38/39/40) in tRNA. In terms of biological role, formation of pseudouridine at positions 38, 39 and 40 in the anticodon stem and loop of transfer RNAs. This Methanopyrus kandleri (strain AV19 / DSM 6324 / JCM 9639 / NBRC 100938) protein is tRNA pseudouridine synthase A.